The chain runs to 187 residues: UPF0340 protein SPJ_0612 (187 aa).

It belongs to the UPF0340 family.

In Streptococcus pneumoniae (strain JJA), this protein is UPF0340 protein SPJ_0612.